The sequence spans 168 residues: ATP synthase subunit b (168 aa).

Residues 10–30 (STILGNFILVTASFAVLIILI) traverse the membrane as a helical segment.

This sequence belongs to the ATPase B chain family. In terms of assembly, F-type ATPases have 2 components, F(1) - the catalytic core - and F(0) - the membrane proton channel. F(1) has five subunits: alpha(3), beta(3), gamma(1), delta(1), epsilon(1). F(0) has three main subunits: a(1), b(2) and c(10-14). The alpha and beta chains form an alternating ring which encloses part of the gamma chain. F(1) is attached to F(0) by a central stalk formed by the gamma and epsilon chains, while a peripheral stalk is formed by the delta and b chains.

It localises to the cell membrane. F(1)F(0) ATP synthase produces ATP from ADP in the presence of a proton or sodium gradient. F-type ATPases consist of two structural domains, F(1) containing the extramembraneous catalytic core and F(0) containing the membrane proton channel, linked together by a central stalk and a peripheral stalk. During catalysis, ATP synthesis in the catalytic domain of F(1) is coupled via a rotary mechanism of the central stalk subunits to proton translocation. Its function is as follows. Component of the F(0) channel, it forms part of the peripheral stalk, linking F(1) to F(0). This is ATP synthase subunit b from Streptococcus suis (strain 98HAH33).